The following is a 219-amino-acid chain: Thiamine-phosphate synthase (219 aa).

Residues 44–48 (QFREK) and N79 each bind 4-amino-2-methyl-5-(diphosphooxymethyl)pyrimidine. Residues D80 and D99 each coordinate Mg(2+). S117 serves as a coordination point for 4-amino-2-methyl-5-(diphosphooxymethyl)pyrimidine. 143 to 145 (TST) contributes to the 2-[(2R,5Z)-2-carboxy-4-methylthiazol-5(2H)-ylidene]ethyl phosphate binding site. K146 is a binding site for 4-amino-2-methyl-5-(diphosphooxymethyl)pyrimidine. Residues G175 and 195-196 (IS) each bind 2-[(2R,5Z)-2-carboxy-4-methylthiazol-5(2H)-ylidene]ethyl phosphate.

The protein belongs to the thiamine-phosphate synthase family. Mg(2+) serves as cofactor.

The catalysed reaction is 2-[(2R,5Z)-2-carboxy-4-methylthiazol-5(2H)-ylidene]ethyl phosphate + 4-amino-2-methyl-5-(diphosphooxymethyl)pyrimidine + 2 H(+) = thiamine phosphate + CO2 + diphosphate. It catalyses the reaction 2-(2-carboxy-4-methylthiazol-5-yl)ethyl phosphate + 4-amino-2-methyl-5-(diphosphooxymethyl)pyrimidine + 2 H(+) = thiamine phosphate + CO2 + diphosphate. It carries out the reaction 4-methyl-5-(2-phosphooxyethyl)-thiazole + 4-amino-2-methyl-5-(diphosphooxymethyl)pyrimidine + H(+) = thiamine phosphate + diphosphate. The protein operates within cofactor biosynthesis; thiamine diphosphate biosynthesis; thiamine phosphate from 4-amino-2-methyl-5-diphosphomethylpyrimidine and 4-methyl-5-(2-phosphoethyl)-thiazole: step 1/1. Its function is as follows. Condenses 4-methyl-5-(beta-hydroxyethyl)thiazole monophosphate (THZ-P) and 2-methyl-4-amino-5-hydroxymethyl pyrimidine pyrophosphate (HMP-PP) to form thiamine monophosphate (TMP). This is Thiamine-phosphate synthase from Bacillus thuringiensis (strain Al Hakam).